Reading from the N-terminus, the 514-residue chain is ATP synthase subunit alpha (514 aa).

170 to 177 (GDRQIGKT) lines the ATP pocket.

The protein belongs to the ATPase alpha/beta chains family. As to quaternary structure, F-type ATPases have 2 components, CF(1) - the catalytic core - and CF(0) - the membrane proton channel. CF(1) has five subunits: alpha(3), beta(3), gamma(1), delta(1), epsilon(1). CF(0) has three main subunits: a(1), b(2) and c(9-12). The alpha and beta chains form an alternating ring which encloses part of the gamma chain. CF(1) is attached to CF(0) by a central stalk formed by the gamma and epsilon chains, while a peripheral stalk is formed by the delta and b chains.

The protein localises to the cell inner membrane. It carries out the reaction ATP + H2O + 4 H(+)(in) = ADP + phosphate + 5 H(+)(out). In terms of biological role, produces ATP from ADP in the presence of a proton gradient across the membrane. The alpha chain is a regulatory subunit. This is ATP synthase subunit alpha from Alcanivorax borkumensis (strain ATCC 700651 / DSM 11573 / NCIMB 13689 / SK2).